Here is a 98-residue protein sequence, read N- to C-terminus: Nuclear protein 2 (98 aa).

A compositionally biased stretch (low complexity) spans 1-11; it reads MEPAAPTVQPR. Disordered regions lie at residues 1–24 and 78–98; these read MEPA…PPVG and LNSQ…TRLT. The span at 81-98 shows a compositional bias: basic residues; sequence QRKRRQRQLQPRPRTRLT.

This sequence belongs to the NUPR family.

The protein localises to the nucleus. Functionally, acts as a transcriptional repressor by inhibiting gene expression at the NUPR1 promoter in a p53/TP53-dependent manner in cancer cells. Involved in the G1 cell cycle arrest, and in a decrease in cell viability and cell proliferation. Plays a role as a negative regulator of the protumoral factor NUPR1. This chain is Nuclear protein 2, found in Bos taurus (Bovine).